The primary structure comprises 226 residues: 3-dehydroquinate dehydratase (226 aa).

3-dehydroquinate-binding positions include Ser9, 32 to 34 (EVR), and Arg59. His119 serves as the catalytic Proton donor/acceptor. The active-site Schiff-base intermediate with substrate is Lys146. The 3-dehydroquinate site is built by Arg187, Thr208, and Gln212.

The protein belongs to the type-I 3-dehydroquinase family. As to quaternary structure, homodimer.

The enzyme catalyses 3-dehydroquinate = 3-dehydroshikimate + H2O. It participates in metabolic intermediate biosynthesis; chorismate biosynthesis; chorismate from D-erythrose 4-phosphate and phosphoenolpyruvate: step 3/7. In terms of biological role, involved in the third step of the chorismate pathway, which leads to the biosynthesis of aromatic amino acids. Catalyzes the cis-dehydration of 3-dehydroquinate (DHQ) and introduces the first double bond of the aromatic ring to yield 3-dehydroshikimate. In Desulfotalea psychrophila (strain LSv54 / DSM 12343), this protein is 3-dehydroquinate dehydratase.